The sequence spans 137 residues: Oleosin Ara h 11.0102 (137 aa).

Ala2 carries the N-acetylalanine; alternate modification. A run of 2 helical transmembrane segments spans residues 27-47 (AVVA…ATVI) and 55-75 (LFVI…LLGL).

Belongs to the oleosin family. In terms of tissue distribution, expressed in seeds (at protein level).

It localises to the lipid droplet. Its subcellular location is the membrane. Its function is as follows. May have a structural role to stabilize the lipid body during desiccation of the seed by preventing coalescence of the oil. Probably interacts with both lipid and phospholipid moieties of lipid bodies. May also provide recognition signals for specific lipase anchorage in lipolysis during seedling growth. The chain is Oleosin Ara h 11.0102 from Arachis hypogaea (Peanut).